The following is a 1158-amino-acid chain: Protein transport protein Sec31B (1158 aa).

WD repeat units lie at residues 4–47 (KELE…EIFE), 65–110 (VSSR…SSGK), 119–159 (KHTG…VPMT), 166–206 (NPPE…PIIK), 209–254 (SHSS…SPLK), 258–298 (SHSR…VVYK), and 301–341 (TQSS…WEAQ). Residues 376–407 (SFAFGGKLVTFGLPSIPVQPVAQACSRPVFIS) form a WD 8; interaction with SEC13 repeat. Disordered regions lie at residues 485 to 520 (LKSD…HTAK), 797 to 843 (TSSY…SSDH), and 968 to 1010 (GPQD…PEPQ). The span at 822–840 (QPSSVMPFSPSQPSPSQGS) shows a compositional bias: low complexity.

It belongs to the WD repeat SEC31 family. COPII is composed of at least 5 proteins: the SEC23/24 complex, the SEC13/31 complex and SAR1. SEC13 and SEC31 make a 2:2 tetramer that forms the edge element of the COPII outer coat. The tetramer self-assembles in multiple copies to form the complete polyhedral cage. Interacts (via WD 8) with SEC13. Interacts with SEC31A. Monoubiquitinated by the BCR(KLHL12) E3 ubiquitin ligase complex, leading to regulate the size of COPII coats.

It localises to the cytoplasm. It is found in the cytoplasmic vesicle. Its subcellular location is the COPII-coated vesicle membrane. The protein localises to the endoplasmic reticulum membrane. As a component of the coat protein complex II (COPII), may function in vesicle budding and cargo export from the endoplasmic reticulum. The chain is Protein transport protein Sec31B (Sec31b) from Mus musculus (Mouse).